Here is a 353-residue protein sequence, read N- to C-terminus: Fe(3+) ions import ATP-binding protein FbpC 1 (353 aa).

Positions 9-239 (VVFRNICKQF…PASAFIADFM (231 aa)) constitute an ABC transporter domain. 41–48 (GPSGCGKT) serves as a coordination point for ATP.

This sequence belongs to the ABC transporter superfamily. Fe(3+) ion importer (TC 3.A.1.10) family. The complex is composed of two ATP-binding proteins (FbpC), two transmembrane proteins (FbpB) and a solute-binding protein (FbpA).

Its subcellular location is the cell inner membrane. The enzyme catalyses Fe(3+)(out) + ATP + H2O = Fe(3+)(in) + ADP + phosphate + H(+). Part of the ABC transporter complex FbpABC involved in Fe(3+) ions import. Responsible for energy coupling to the transport system. The protein is Fe(3+) ions import ATP-binding protein FbpC 1 of Rhizobium meliloti (strain 1021) (Ensifer meliloti).